The sequence spans 128 residues: uncharacterized protein (128 aa).

One can recognise an S1 motif domain in the interval 6 to 74 (GSKLQGKITG…KDGKIGLSIK (69 aa)). Positions 72-128 (SIKKAKDRPQARPRNDFRPKESFEQKMNKFLKDSEDRLSSLKRNTESKRGGRGARRG) are disordered. Residues 78 to 120 (DRPQARPRNDFRPKESFEQKMNKFLKDSEDRLSSLKRNTESKR) show a composition bias toward basic and acidic residues.

The protein belongs to the peptidase U57 family.

This is an uncharacterized protein from Bacillus subtilis (strain 168).